We begin with the raw amino-acid sequence, 529 residues long: 3-ketoacyl-CoA synthase 20 (529 aa).

Residues 1-22 are disordered; it reads MSHNQNQPHRPVPVHVTNAEPN. 2 consecutive transmembrane segments (helical) span residues 52–72 and 84–104; these read LYILLLPLLAATIANLSSFTI and FHFLSATLATALLISLSTAYF. The region spanning 103–396 is the FAE domain; sequence YFTTRPRRVF…FFATLVARKV (294 aa). Residues cysteine 247, histidine 326, histidine 415, histidine 419, and asparagine 452 contribute to the active site.

This sequence belongs to the thiolase-like superfamily. Chalcone/stilbene synthases family. As to expression, expressed in aerial organs. Expressed in leaves, flowers, siliques and stems. Expressed in roots, young seedlings, leaves, flowers and siliques.

Its subcellular location is the membrane. The enzyme catalyses a very-long-chain acyl-CoA + malonyl-CoA + H(+) = a very-long-chain 3-oxoacyl-CoA + CO2 + CoA. It participates in lipid metabolism; fatty acid biosynthesis. Inhibited by K3 herbicides such as alachlor, allidochlor, anilofos, cafenstrole, fentrazamide and flufenacet. Strongly inhibited by metazachlor and only slightly by mefluidide. Functionally, mediates the synthesis of VLCFAs from 22 to 26 carbons in length (e.g. C22, C24, C26). Functionally redundant with KCS2 in the two-carbon elongation of C22 fatty acids that is required for cuticular wax and root suberin biosynthesis. This is 3-ketoacyl-CoA synthase 20 from Arabidopsis thaliana (Mouse-ear cress).